The sequence spans 726 residues: MDGNNVDPTGGCPVMHGGNTAMDKPVTKWWPNALNLDILHQHGARTNPMDPDYDHRAAVKALDFEAVKADVKALMTQDQDWWPADWGHYGGLMIRLAWHSAGTYRMQDGRGGAGSGNIRFAPLNSWPDNASLDKARRLLWPVKKKYGNALSWADLIILSGNMAYESMGLKTFGFGFGREDIWGPETDVYWGSENEWLAPSENRYGDLDDASTLENPLAAVHMGLIYVNPEGVNGQPDPARTAQHVRETFARMAMDDEETAALTCGGHTVGKAHGRGAVDNIGVEPEAAGIEAQGFGWSNPRHDGKATNAFTSGIEGAWTTHPTQWDMGYFKLLFGYEWQLTKSPAGAWQWEPIDIKEEDMPVDPTDPSKRHQPMMTDADMAMKVDPIYNEICQKFMADPEYFADVFGRAWFKLTHRDMGPKACYIGPDVPAEDLIWQDPIPAGSTEYDVAAVKARIADSGLSAADMIATAWDSARTFRGSDKRGGANGARIRLAPQKDWAGNEPERLAKVLGILEPIAAETGASVADVIVLAGNVGLEQSIKAAGYDVDVPFAQGRGDATADQTDAASFDVLEPLADGFRNWQKADYAVSAEEMMLDKAQLLGLTAAEMTVLVGGMRVLGVNHGNSKHGVFTDRAGQLTPDFFVNLTDMAYSWHPVDGENTYEIRDRATGAVKWTATSADLVFGSNSVLRAYAEVYAQDDNAEKFVRDFVAAWTKVMNADRFDLAA.

A cross-link (tryptophyl-tyrosyl-methioninium (Trp-Tyr) (with M-252)) is located at residues 98 to 226 (WHSAGTYRMQ…LAAVHMGLIY (129 aa)). The active-site Proton acceptor is the His-99. A cross-link (tryptophyl-tyrosyl-methioninium (Tyr-Met) (with W-98)) is located at residues 226–252 (YVNPEGVNGQPDPARTAQHVRETFARM). His-267 is a heme b binding site.

This sequence belongs to the peroxidase family. Peroxidase/catalase subfamily. Homodimer or homotetramer. Requires heme b as cofactor. In terms of processing, formation of the three residue Trp-Tyr-Met cross-link is important for the catalase, but not the peroxidase activity of the enzyme.

The catalysed reaction is H2O2 + AH2 = A + 2 H2O. It catalyses the reaction 2 H2O2 = O2 + 2 H2O. In terms of biological role, bifunctional enzyme with both catalase and broad-spectrum peroxidase activity. In Roseobacter denitrificans (strain ATCC 33942 / OCh 114) (Erythrobacter sp. (strain OCh 114)), this protein is Catalase-peroxidase.